Here is a 145-residue protein sequence, read N- to C-terminus: Transcription antitermination protein NusB (145 aa).

It belongs to the NusB family.

Involved in transcription antitermination. Required for transcription of ribosomal RNA (rRNA) genes. Binds specifically to the boxA antiterminator sequence of the ribosomal RNA (rrn) operons. The protein is Transcription antitermination protein NusB of Acidothermus cellulolyticus (strain ATCC 43068 / DSM 8971 / 11B).